The chain runs to 395 residues: Bifunctional fatty acid conjugase/Delta(12)-oleate desaturase (395 aa).

2 helical membrane passes run phenylalanine 73 to proline 93 and methionine 97 to alanine 117. The Histidine box-1 signature appears at histidine 118 to histidine 122. The helical transmembrane segment at tryptophan 130–phenylalanine 150 threads the bilayer. The Histidine box-2 signature appears at histidine 154–histidine 158. 3 helical membrane passes run valine 192–serine 212, phenylalanine 236–alanine 256, and leucine 264–phenylalanine 284. The short motif at histidine 328 to histidine 332 is the Histidine box-3 element.

It belongs to the fatty acid desaturase type 1 family.

The protein resides in the membrane. It carries out the reaction a (9Z,12Z)-octadecadienoyl-containing glycerolipid + 2 Fe(II)-[cytochrome b5] + O2 + 2 H(+) = a (9Z,11E,13Z)-octadeca-9,11,13-trienoyl-containing glycerolipid + 2 Fe(III)-[cytochrome b5] + 2 H2O. The protein operates within lipid metabolism; polyunsaturated fatty acid biosynthesis. Its function is as follows. Converts a single cis double bond at position 12 of linoleate incorporated into phosphatidylcholine into conjugated 11-trans and 13-cis double bonds. Produces punicic acid (18:3(9Z,11E,13Z)) from linoleic acid and conjugated octadecatetraenoic fatty acid from gamma-linolenic acid. No activity with cis- and trans-vaccenic acid, alpha-linolenic acid or homo-gamma-linolenic acid. 16:2(9Z,12Z), 18:3(9Z,12Z,15Z) and 18:2(9Z,12Z) are substrates for the conjugase to form trans-Delta(11) and cis-Delta(13) double bonds. No activity on the cis-Delta(9) double bonds of oleic and palmitoleic acids. In Punica granatum (Pomegranate), this protein is Bifunctional fatty acid conjugase/Delta(12)-oleate desaturase.